We begin with the raw amino-acid sequence, 496 residues long: Solute carrier family 2, facilitated glucose transporter member 3 (496 aa).

Topologically, residues 1–10 (MGTQKVTPAL) are cytoplasmic. Residues 11-32 (IFAITVATIGSFQFGYNTGVIN) traverse the membrane as a helical segment. Residues 33–64 (APEKIIKEFINKTLTDKGNAPPSEVLLTSLWS) lie on the Extracellular side of the membrane. Residue Asn43 is glycosylated (N-linked (GlcNAc...) asparagine). A helical transmembrane segment spans residues 65–85 (LSVAIFSVGGMIGSFSVGLFV). Over 86 to 90 (NRFGR) the chain is Cytoplasmic. A helical membrane pass occupies residues 91-111 (RNSMLIVNLLAVTGGCFMGLC). The Extracellular portion of the chain corresponds to 112–118 (KVAKSVE). A helical transmembrane segment spans residues 119–142 (MLILGRLIIGLFCGLCTGFVPMYI). Topologically, residues 143–153 (GEISPTALRGA) are cytoplasmic. Residues 154–174 (FGTLNQLGIVVGILVAQIFGL) traverse the membrane as a helical segment. Residue Gln159 participates in D-glucose binding. Residues 175–183 (EFILGSEEL) lie on the Extracellular side of the membrane. Residues 184 to 204 (WPLLLGFTILPTILQSAALPF) traverse the membrane as a helical segment. Residues 205–269 (CPESPRFLLI…LFRVSSYRQP (65 aa)) are Cytoplasmic-facing. At Thr232 the chain carries Phosphothreonine. The helical transmembrane segment at 270–290 (IIISIVLQLSQQLSGINAVFY) threads the bilayer. The interval 277–279 (QLS) is important for selectivity against fructose. D-glucose is bound by residues 280–281 (QQ) and Asn286. Over 291-304 (YSTGIFKDAGVQEP) the chain is Extracellular. The chain crosses the membrane as a helical span at residues 305–325 (IYATIGAGVVNTIFTVVSLFL). A D-glucose-binding site is contributed by Asn315. Residues 326 to 331 (VERAGR) lie on the Cytoplasmic side of the membrane. Residues 332-352 (RTLHMIGLGGMAFCSTLMTVS) form a helical membrane-spanning segment. At 353–363 (LLLKDNYNGMS) the chain is on the extracellular side. A helical membrane pass occupies residues 364 to 389 (FVCIGAILVFVAFFEIGPGPIPWFIV). Glu378 and Trp386 together coordinate D-glucose. Topologically, residues 390-399 (AELFSQGPRP) are cytoplasmic. The helical transmembrane segment at 400 to 420 (AAMAVAGCSNWTSNFLVGLLF) threads the bilayer. Over 421–429 (PSAAHYLGA) the chain is Extracellular. Residues 430–450 (YVFIIFTGFLITFLAFTFFKV) traverse the membrane as a helical segment. The Cytoplasmic segment spans residues 451-496 (PETRGRTFEDITRAFEGQAHGADRSGKDGVMEVNSIEPAKETTTNV). Residues Ser475 and Ser485 each carry the phosphoserine modification. Position 492 is a phosphothreonine (Thr492).

The protein belongs to the major facilitator superfamily. Sugar transporter (TC 2.A.1.1) family. Glucose transporter subfamily. As to quaternary structure, interacts with SMIM43; the interaction may promote SLC2A3-mediated glucose transport to meet the energy needs of mesendoderm differentiation.

Its subcellular location is the cell membrane. The protein localises to the perikaryon. It is found in the cell projection. It carries out the reaction D-glucose(out) = D-glucose(in). The catalysed reaction is D-galactose(in) = D-galactose(out). Its activity is regulated as follows. Deoxyglucose transport is inhibited by D-glucose, D-galactose and maltose. Galactose transport is inhibited by D-glucose and maltose. In terms of biological role, facilitative glucose transporter. Can also mediate the uptake of various other monosaccharides across the cell membrane. Mediates the uptake of glucose, 2-deoxyglucose, galactose, mannose, xylose and fucose, and probably also dehydroascorbate. Does not mediate fructose transport. Required for mesendoderm differentiation. The chain is Solute carrier family 2, facilitated glucose transporter member 3 from Pongo abelii (Sumatran orangutan).